The chain runs to 901 residues: Putative serine/threonine-protein kinase YPL150W (901 aa).

The 247-residue stretch at 41–287 (YKILKQIGEG…LSQVLRHPFL (247 aa)) folds into the Protein kinase domain. ATP contacts are provided by residues 47-55 (IGEGSFGKV) and K70. D157 acts as the Proton acceptor in catalysis. S456 is modified (phosphoserine). The segment at 500 to 530 (APSSGSFLKKNSGSIQKSRTDTVANPSRTES) is disordered. The residue at position 533 (S533) is a Phosphoserine. Low complexity predominate over residues 588–599 (SSISSEISQTST). Disordered stretches follow at residues 588 to 629 (SSIS…NRPL) and 745 to 770 (TQRP…SSKR). Over residues 600 to 613 (GNYDSESAENSRSI) the composition is skewed to polar residues. Over residues 759–770 (RHGKNARRSSKR) the composition is skewed to basic residues.

It belongs to the protein kinase superfamily. Ser/Thr protein kinase family.

It carries out the reaction L-seryl-[protein] + ATP = O-phospho-L-seryl-[protein] + ADP + H(+). It catalyses the reaction L-threonyl-[protein] + ATP = O-phospho-L-threonyl-[protein] + ADP + H(+). Functionally, putative serine/threonine-protein kinase. This Saccharomyces cerevisiae (strain ATCC 204508 / S288c) (Baker's yeast) protein is Putative serine/threonine-protein kinase YPL150W.